The primary structure comprises 627 residues: Endoglucanase 5 (627 aa).

The N-terminal stretch at 1–26 is a signal peptide; that stretch reads MRKFGGSLFGVSLLLSVLLAAATAAA. The Nucleophile role is filled by Asp-83. An N-linked (GlcNAc...) asparagine glycan is attached at Asn-196. Residue His-416 is part of the active site. N-linked (GlcNAc...) asparagine glycosylation is present at Asn-465. Residues Asp-468 and Glu-477 contribute to the active site. Asn-561 is a glycosylation site (N-linked (GlcNAc...) asparagine).

The protein belongs to the glycosyl hydrolase 9 (cellulase E) family.

The protein resides in the secreted. The enzyme catalyses Endohydrolysis of (1-&gt;4)-beta-D-glucosidic linkages in cellulose, lichenin and cereal beta-D-glucans.. The sequence is that of Endoglucanase 5 from Arabidopsis thaliana (Mouse-ear cress).